Here is a 446-residue protein sequence, read N- to C-terminus: UDP-N-acetylmuramoylalanine--D-glutamate ligase (446 aa).

An ATP-binding site is contributed by 115-121; it reads GTNGKTT.

This sequence belongs to the MurCDEF family.

It is found in the cytoplasm. It carries out the reaction UDP-N-acetyl-alpha-D-muramoyl-L-alanine + D-glutamate + ATP = UDP-N-acetyl-alpha-D-muramoyl-L-alanyl-D-glutamate + ADP + phosphate + H(+). It functions in the pathway cell wall biogenesis; peptidoglycan biosynthesis. Cell wall formation. Catalyzes the addition of glutamate to the nucleotide precursor UDP-N-acetylmuramoyl-L-alanine (UMA). This Trichlorobacter lovleyi (strain ATCC BAA-1151 / DSM 17278 / SZ) (Geobacter lovleyi) protein is UDP-N-acetylmuramoylalanine--D-glutamate ligase.